Reading from the N-terminus, the 60-residue chain is Large ribosomal subunit protein uL30 (60 aa).

This sequence belongs to the universal ribosomal protein uL30 family. In terms of assembly, part of the 50S ribosomal subunit.

This chain is Large ribosomal subunit protein uL30, found in Bacillus anthracis (strain A0248).